The following is an 80-amino-acid chain: Lantibiotic Flvalpha.c (80 aa).

A propeptide spans 1–38 (MNKNPIYRSEEEAKNIACGNVAAELDENSQALDAINGA) (cleaved by FlvT). 2 positions are modified to 2,3-didehydrobutyrine; by FlvM1: T43 and T47. Residues 52–55 (TLGC) constitute a cross-link (beta-methyllanthionine (Thr-Cys); by FlvM1). Positions 58-68 (SYGLGNGGYCC) form a cross-link, lanthionine (Ser-Cys); by FlvM1. 2 consecutive cross-links (beta-methyllanthionine (Thr-Cys); by FlvM1) follow at residues 69–74 (TYTVEC) and 71–78 (TVECSKTC).

In terms of processing, the lanthionine formed by Ser-58 and Cys-68 forms a putative lipid II binding motif. Post-translationally, maturation of FlvA1 peptides involves the enzymatic conversion of Thr, and Ser into dehydrated AA and the formation of thioether bonds with cysteines. Modifications are processed by the flavecin synthetase FlvM1. This is followed by membrane translocation and cleavage of the modified precursor. Contains DL-lanthionine and DL-beta-methyllanthionine, when coepressed in E.coli with the flavecin synthetase FlvM1.

The protein resides in the secreted. In terms of biological role, lanthionine-containing peptide antibiotic (lantibiotic) only active on Gram-positive bacteria in synergy with Flvbeta peptides, which are encoded by the same operon than Flvalpha.a. Shows antibacterial activity in synergy with Flvbeta.b, Flvbeta.c, Flvbeta.e and Flvbeta.g. Does not show antibacterial activity when tested with Flvbeta.a, Flvbeta.d, Flvbeta.f and Flvbeta.h. The bactericidal activity of lantibiotics is based on depolarization of energized bacterial cytoplasmic membranes, initiated by the formation of aqueous transmembrane pores. This chain is Lantibiotic Flvalpha.c, found in Ruminococcus flavefaciens.